The primary structure comprises 309 residues: GTP cyclohydrolase MptA (309 aa).

This sequence belongs to the GTP cyclohydrolase IV family. As to quaternary structure, homodimer. Requires Fe(2+) as cofactor.

The enzyme catalyses GTP + H2O = 7,8-dihydroneopterin 2',3'-cyclic phosphate + formate + diphosphate + H(+). Its pathway is cofactor biosynthesis; 5,6,7,8-tetrahydromethanopterin biosynthesis. Converts GTP to 7,8-dihydro-D-neopterin 2',3'-cyclic phosphate, the first intermediate in the biosynthesis of coenzyme methanopterin. This is GTP cyclohydrolase MptA from Methanococcus aeolicus (strain ATCC BAA-1280 / DSM 17508 / OCM 812 / Nankai-3).